Consider the following 441-residue polypeptide: MTTVTRFAPSPTGYIHVGNLRTALMNWAIARKSGGTFILRLDDTDRERSKQEYSDGIMEDLEWLGLTWDRLERQSDRLDRYAEAADELRRAGRFYECFESPTELDLKRKKLLNMGKPPVYDRAALKLSDEERARLRAERGGYWRFLLDQERIEWTDGILGPISIDAASVSDPVLIRADGQVLYTFASSVDDIDMGVTFIVRGGDHVTNTATQIQIMQALGGTPPSFAHHSLLTGAQGEALSKRLGTLSLRDLRARGVEPMALLSLMARLGSSQPVELFRTHEELLAGFDVSTFGAAPTKFDAEDLFPLTRHYVQGLPFEAVRGRIAALGVPDDLAEPFWRVAKDNIGVLEDLGGWWTLFSEGAEPQIDPEDEDFIRQAMTLLPPPPYGPESWAQFTAAVKEATGRKGKGLFMPLRKALTGQAHGPDMSEVMPLLQKVRAKG.

The 'HIGH' region motif lies at proline 9–asparagine 19. Residues alanine 239–arginine 243 carry the 'KMSKS' region motif. Lysine 242 contacts ATP.

The protein belongs to the class-I aminoacyl-tRNA synthetase family. Glutamate--tRNA ligase type 1 subfamily. As to quaternary structure, monomer.

The protein resides in the cytoplasm. The enzyme catalyses tRNA(Glu) + L-glutamate + ATP = L-glutamyl-tRNA(Glu) + AMP + diphosphate. Catalyzes the attachment of glutamate to tRNA(Glu) in a two-step reaction: glutamate is first activated by ATP to form Glu-AMP and then transferred to the acceptor end of tRNA(Glu). This chain is Glutamate--tRNA ligase 2, found in Cereibacter sphaeroides (strain ATCC 17029 / ATH 2.4.9) (Rhodobacter sphaeroides).